The sequence spans 246 residues: Caffeoyl-CoA O-methyltransferase 1 (246 aa).

A substrate-binding site is contributed by Lys21. S-adenosyl-L-methionine contacts are provided by residues Thr63, Glu85, 87–88, Ser93, Asp111, and Ala140; that span reads GV. Asp162 contacts substrate. Residue Asp162 coordinates a divalent metal cation. Asp164 is a binding site for S-adenosyl-L-methionine. Residues Asp188 and Asn189 each coordinate a divalent metal cation. Residue Asn193 participates in substrate binding.

It belongs to the class I-like SAM-binding methyltransferase superfamily. Cation-dependent O-methyltransferase family. CCoAMT subfamily. A divalent metal cation serves as cofactor.

It carries out the reaction (E)-caffeoyl-CoA + S-adenosyl-L-methionine = (E)-feruloyl-CoA + S-adenosyl-L-homocysteine + H(+). The protein operates within aromatic compound metabolism; phenylpropanoid biosynthesis. In terms of biological role, methylates caffeoyl-CoA to feruloyl-CoA and 5-hydroxyferuloyl-CoA to sinapoyl-CoA. Plays a role in the synthesis of feruloylated polysaccharides. Involved in the reinforcement of the plant cell wall. Also involved in the responding to wounding or pathogen challenge by the increased formation of cell wall-bound ferulic acid polymers. This chain is Caffeoyl-CoA O-methyltransferase 1 (CCOMT), found in Eucalyptus globulus (Tasmanian blue gum).